We begin with the raw amino-acid sequence, 420 residues long: Tyrosine--tRNA ligase (420 aa).

Tyr-33 is a binding site for L-tyrosine. The short motif at 38–47 is the 'HIGH' region element; that stretch reads PTGPSLHAGH. Tyr-167 and Gln-171 together coordinate L-tyrosine. Residues 227–231 carry the 'KMSKS' region motif; that stretch reads KFGKS. Residue Lys-230 coordinates ATP. Residues 352–418 enclose the S4 RNA-binding domain; sequence RTIIDLLVAS…GKKNFAGVQI (67 aa).

This sequence belongs to the class-I aminoacyl-tRNA synthetase family. TyrS type 1 subfamily. Homodimer.

The protein resides in the cytoplasm. The enzyme catalyses tRNA(Tyr) + L-tyrosine + ATP = L-tyrosyl-tRNA(Tyr) + AMP + diphosphate + H(+). Catalyzes the attachment of tyrosine to tRNA(Tyr) in a two-step reaction: tyrosine is first activated by ATP to form Tyr-AMP and then transferred to the acceptor end of tRNA(Tyr). The sequence is that of Tyrosine--tRNA ligase from Corynebacterium glutamicum (strain ATCC 13032 / DSM 20300 / JCM 1318 / BCRC 11384 / CCUG 27702 / LMG 3730 / NBRC 12168 / NCIMB 10025 / NRRL B-2784 / 534).